We begin with the raw amino-acid sequence, 298 residues long: Probable 2-(5''-triphosphoribosyl)-3'-dephosphocoenzyme-A synthase 2 (298 aa).

This sequence belongs to the CitG/MdcB family.

The catalysed reaction is 3'-dephospho-CoA + ATP = 2'-(5''-triphospho-alpha-D-ribosyl)-3'-dephospho-CoA + adenine. This is Probable 2-(5''-triphosphoribosyl)-3'-dephosphocoenzyme-A synthase 2 from Salmonella paratyphi A (strain ATCC 9150 / SARB42).